Here is a 262-residue protein sequence, read N- to C-terminus: Indole-3-glycerol phosphate synthase (262 aa).

This sequence belongs to the TrpC family.

The catalysed reaction is 1-(2-carboxyphenylamino)-1-deoxy-D-ribulose 5-phosphate + H(+) = (1S,2R)-1-C-(indol-3-yl)glycerol 3-phosphate + CO2 + H2O. Its pathway is amino-acid biosynthesis; L-tryptophan biosynthesis; L-tryptophan from chorismate: step 4/5. This Bordetella petrii (strain ATCC BAA-461 / DSM 12804 / CCUG 43448) protein is Indole-3-glycerol phosphate synthase.